Reading from the N-terminus, the 1043-residue chain is Liprin-alpha-4 (1043 aa).

Coiled coils occupy residues 24 to 332 and 426 to 470; these read EKVR…GRGG and ILDA…RVTS. The segment at 498–617 is disordered; that stretch reads SASPPLSGRS…AKRKGIKSSI (120 aa). A Phosphoserine modification is found at serine 500. A compositionally biased stretch (polar residues) spans 505-516; that stretch reads GRSTPKLTSRSA. Position 541 is a phosphoserine (serine 541). Residues 544 to 555 show a composition bias toward basic and acidic residues; sequence SREENREDKATI. A compositionally biased stretch (low complexity) spans 590-602; that stretch reads QDSNPSSSNSSQD. 3 consecutive SAM domains span residues 688–754, 803–867, and 891–960; these read WDGP…MVSL, NHEW…LKRL, and WTND…LLAL. Residues 864–890 are a coiled coil; it reads LKRLNYDRKELEKRREESQHEIKDVLV.

The protein belongs to the liprin family. Liprin-alpha subfamily. As to quaternary structure, forms homodimers and heterodimers with liprins-alpha and liprins-beta. Interacts with the second PTPase domain of PTPRD, PTPRF and PTPRS. Interacts with RIMS1 and RIMS2. Interacts with GIT1 and GIT2. Interacts with GRIP1. Interacts with KIF1A.

The protein localises to the cytoplasm. It localises to the cell surface. May regulate the disassembly of focal adhesions. May localize receptor-like tyrosine phosphatases type 2A at specific sites on the plasma membrane, possibly regulating their interaction with the extracellular environment and their association with substrates. This Rattus norvegicus (Rat) protein is Liprin-alpha-4 (Ppfia4).